A 261-amino-acid chain; its full sequence is NAD-capped RNA hydrolase NudC (261 aa).

Arg69 is a binding site for substrate. Zn(2+)-binding residues include Cys98 and Cys101. Glu111 is a substrate binding site. Zn(2+) is bound by residues Cys116 and Cys119. Residue Tyr124 coordinates substrate. Residues 125-248 enclose the Nudix hydrolase domain; that stretch reads PQIAPCIIVA…TVARRLIEDT (124 aa). 3 residues coordinate a divalent metal cation: Ala158, Glu174, and Glu178. The short motif at 159–180 is the Nudix box element; that stretch reads GFVEVGETLEQTVAREVMEESS. 192 to 199 contributes to the substrate binding site; sequence QPWPFPQS. Residue Glu219 participates in a divalent metal cation binding. Ala241 is a binding site for substrate.

The protein belongs to the Nudix hydrolase family. NudC subfamily. Homodimer. Mg(2+) is required as a cofactor. Requires Mn(2+) as cofactor. Zn(2+) serves as cofactor.

The catalysed reaction is a 5'-end NAD(+)-phospho-ribonucleoside in mRNA + H2O = a 5'-end phospho-adenosine-phospho-ribonucleoside in mRNA + beta-nicotinamide D-ribonucleotide + 2 H(+). It catalyses the reaction NAD(+) + H2O = beta-nicotinamide D-ribonucleotide + AMP + 2 H(+). It carries out the reaction NADH + H2O = reduced beta-nicotinamide D-ribonucleotide + AMP + 2 H(+). In terms of biological role, mRNA decapping enzyme that specifically removes the nicotinamide adenine dinucleotide (NAD) cap from a subset of mRNAs by hydrolyzing the diphosphate linkage to produce nicotinamide mononucleotide (NMN) and 5' monophosphate mRNA. The NAD-cap is present at the 5'-end of some mRNAs and stabilizes RNA against 5'-processing. Has preference for mRNAs with a 5'-end purine. Catalyzes the hydrolysis of a broad range of dinucleotide pyrophosphates. The polypeptide is NAD-capped RNA hydrolase NudC (Erwinia tasmaniensis (strain DSM 17950 / CFBP 7177 / CIP 109463 / NCPPB 4357 / Et1/99)).